The primary structure comprises 258 residues: MYRLYWLDEHNPRSPFPPAEQAMDEPNGLLAVGGDLSPVRLEQAYRRGIFPWYGPGQPILWWSPDPRCIFRPGWLHVSRRLARRLRTGAFRMSLDTDFTGVISACAAPREDQAGTWIVPEMMHAYEALFELGIAHSVECWDRDGELVGGLYGVALSGAFFGESMFSRRSDASKACMAWLSAQLHRWGFALFDCQVSSPHLRRMGAVDVSRSRFLAQLQQALVLPHRRGPWRFDRDLDPVAIHRQHQTRTTAPEVLYGS.

It belongs to the L/F-transferase family.

The protein localises to the cytoplasm. It carries out the reaction N-terminal L-lysyl-[protein] + L-leucyl-tRNA(Leu) = N-terminal L-leucyl-L-lysyl-[protein] + tRNA(Leu) + H(+). It catalyses the reaction N-terminal L-arginyl-[protein] + L-leucyl-tRNA(Leu) = N-terminal L-leucyl-L-arginyl-[protein] + tRNA(Leu) + H(+). The catalysed reaction is L-phenylalanyl-tRNA(Phe) + an N-terminal L-alpha-aminoacyl-[protein] = an N-terminal L-phenylalanyl-L-alpha-aminoacyl-[protein] + tRNA(Phe). Its function is as follows. Functions in the N-end rule pathway of protein degradation where it conjugates Leu, Phe and, less efficiently, Met from aminoacyl-tRNAs to the N-termini of proteins containing an N-terminal arginine or lysine. This chain is Leucyl/phenylalanyl-tRNA--protein transferase, found in Alkalilimnicola ehrlichii (strain ATCC BAA-1101 / DSM 17681 / MLHE-1).